A 149-amino-acid polypeptide reads, in one-letter code: Protein K7 (149 aa).

It belongs to the orthopoxvirus OPG044 family. Interacts with DDX3; this interaction inhibits DDX3 and suppresses DDX3-mediated IFN-beta promoter induction. Interacts with TRAF6 and IRAK2; these interactions suppress TLR-dependent NF-KappaB activation.

The protein resides in the host cytoplasm. Virulence factor that affects the acute immune response to infection. Bcl-2-like protein which, through its interaction with the DEAD box RNA helicase DDX3X/DDX3, prevents TBK1/IKKepsilon-mediated IRF3 activation. Contributes to virulence by binding to the host TRAF6 and IRAK2 and preventing host NF-kappa-B activation. This chain is Protein K7 (OPG044), found in Homo sapiens (Human).